Here is a 570-residue protein sequence, read N- to C-terminus: Sulfite reductase [NADPH] hemoprotein beta-component (570 aa).

Positions 434, 440, 479, and 483 each coordinate [4Fe-4S] cluster. A siroheme-binding site is contributed by C483.

It belongs to the nitrite and sulfite reductase 4Fe-4S domain family. Alpha(8)-beta(8). The alpha component is a flavoprotein, the beta component is a hemoprotein. The cofactor is siroheme. [4Fe-4S] cluster is required as a cofactor.

It catalyses the reaction hydrogen sulfide + 3 NADP(+) + 3 H2O = sulfite + 3 NADPH + 4 H(+). It participates in sulfur metabolism; hydrogen sulfide biosynthesis; hydrogen sulfide from sulfite (NADPH route): step 1/1. In terms of biological role, component of the sulfite reductase complex that catalyzes the 6-electron reduction of sulfite to sulfide. This is one of several activities required for the biosynthesis of L-cysteine from sulfate. The chain is Sulfite reductase [NADPH] hemoprotein beta-component from Salmonella dublin (strain CT_02021853).